Reading from the N-terminus, the 210-residue chain is Small ribosomal subunit protein uS5 (210 aa).

Positions 1–11 (MTQPNTQTTPN) are enriched in polar residues. The tract at residues 1–56 (MTQPNTQTTPNDVPAAAEGQHQEQQQQQRRGGGRERRGGGRRGDRRGQERDSEWQE) is disordered. Positions 18 to 29 (EGQHQEQQQQQR) are enriched in low complexity. The segment covering 32–56 (GGRERRGGGRRGDRRGQERDSEWQE) has biased composition (basic and acidic residues). The 64-residue stretch at 54–117 (WQERVVQIRR…ADGKKHLVKV (64 aa)) folds into the S5 DRBM domain.

This sequence belongs to the universal ribosomal protein uS5 family. Part of the 30S ribosomal subunit. Contacts proteins S4 and S8.

In terms of biological role, with S4 and S12 plays an important role in translational accuracy. Functionally, located at the back of the 30S subunit body where it stabilizes the conformation of the head with respect to the body. This chain is Small ribosomal subunit protein uS5, found in Prochlorococcus marinus (strain MIT 9303).